We begin with the raw amino-acid sequence, 340 residues long: Guanine nucleotide-binding protein G(I)/G(S)/G(T) subunit beta-3 (340 aa).

WD repeat units follow at residues 53-83 (GHLA…IVWD), 95-125 (LRSS…SIYN), 141-170 (AHTG…ALWD), 182-212 (GHTG…KLWD), 224-254 (GHES…RLFD), 268-298 (SIIC…NVWD), and 310-340 (GHDN…KIWN).

This sequence belongs to the WD repeat G protein beta family. As to quaternary structure, g proteins are composed of 3 units, alpha, beta and gamma. Interacts with RASD2.

Functionally, guanine nucleotide-binding proteins (G proteins) are involved as a modulator or transducer in various transmembrane signaling systems. The beta and gamma chains are required for the GTPase activity, for replacement of GDP by GTP, and for G protein-effector interaction. This Homo sapiens (Human) protein is Guanine nucleotide-binding protein G(I)/G(S)/G(T) subunit beta-3 (GNB3).